Consider the following 579-residue polypeptide: YTH domain-containing family protein 2 (579 aa).

Residues 1 to 45 (MSASSLLEQRPKGQGNKVQNGSVHQKDGLNDDDFEPYLSPQARPN) are disordered. S2 carries the post-translational modification N-acetylserine. 6 positions are modified to phosphoserine: S2, S4, S5, S22, S39, and S196. A localization to mRNA processing bodies (P-bodies) region spans residues 2-384 (SASSLLEQRP…QAGSGSTPSE (383 aa)). A disordered region spans residues 247–387 (AKQQPKLKTK…SGSTPSEPHP (141 aa)). Residues 291-316 (ALVQNIGQPTQGSPQPVGQQANNSPP) show a composition bias toward polar residues. Low complexity predominate over residues 337 to 349 (AQLSVQQQAAQPT). S359 is subject to Phosphoserine. The span at 359 to 371 (SGFGHNGVDGNGV) shows a compositional bias: gly residues. Over residues 372 to 383 (GQSQAGSGSTPS) the composition is skewed to polar residues. The segment at 385 to 579 (PHPVLEKLRS…VKKERQGRGK (195 aa)) is interaction with m6A-containing mRNAs. S394 is subject to Phosphoserine. A YTH domain is found at 410-544 (GRVFIIKSYS…EKAKQVLKII (135 aa)). RNA contacts are provided by residues 416 to 418 (KSY), D422, 432 to 433 (WC), N462, W486, and W491.

Belongs to the YTHDF family. YTHDF2 subfamily. In terms of assembly, interacts with CNOT1; interaction is direct and promotes recruitment of the CCR4-NOT complex. Interacts with YTHDF3. Interacts with RIDA/HRSP12; interaction leads to recruitment of the ribonuclease P/MRP complex. Ubiquitinated by the SCF(SKP2) complex, leading to its degradation. In terms of tissue distribution, widely expressed, with highest expression in testis.

The protein resides in the cytoplasm. Its subcellular location is the cytosol. The protein localises to the P-body. It is found in the stress granule. It localises to the nucleus. Its function is as follows. Specifically recognizes and binds N6-methyladenosine (m6A)-containing RNAs, and regulates their stability. M6A is a modification present at internal sites of mRNAs and some non-coding RNAs and plays a role in mRNA stability and processing. Acts as a regulator of mRNA stability by promoting degradation of m6A-containing mRNAs via interaction with the CCR4-NOT and ribonuclease P/MRP complexes, depending on the context. The YTHDF paralogs (YTHDF1, YTHDF2 and YTHDF3) share m6A-containing mRNAs targets and act redundantly to mediate mRNA degradation and cellular differentiation. M6A-containing mRNAs containing a binding site for RIDA/HRSP12 (5'-GGUUC-3') are preferentially degraded by endoribonucleolytic cleavage: cooperative binding of RIDA/HRSP12 and YTHDF2 to transcripts leads to recruitment of the ribonuclease P/MRP complex. Other m6A-containing mRNAs undergo deadenylation via direct interaction between YTHDF2 and CNOT1, leading to recruitment of the CCR4-NOT and subsequent deadenylation of m6A-containing mRNAs. Required maternally to regulate oocyte maturation: probably acts by binding to m6A-containing mRNAs, thereby regulating maternal transcript dosage during oocyte maturation, which is essential for the competence of oocytes to sustain early zygotic development. Also required during spermatogenesis: regulates spermagonial adhesion by promoting degradation of m6A-containing transcripts coding for matrix metallopeptidases. Also involved in hematopoietic stem cells specification by binding to m6A-containing mRNAs, leading to promote their degradation. Also acts as a regulator of neural development by promoting m6A-dependent degradation of neural development-related mRNA targets. Inhibits neural specification of induced pluripotent stem cells by binding to methylated neural-specific mRNAs and promoting their degradation, thereby restraining neural differentiation. Regulates circadian regulation of hepatic lipid metabolism: acts by promoting m6A-dependent degradation of PPARA transcripts. Regulates the innate immune response to infection by inhibiting the type I interferon response: acts by binding to m6A-containing IFNB transcripts and promoting their degradation. May also act as a promoter of cap-independent mRNA translation following heat shock stress: upon stress, relocalizes to the nucleus and specifically binds mRNAs with some m6A methylation mark at their 5'-UTR, protecting demethylation of mRNAs by FTO, thereby promoting cap-independent mRNA translation. Regulates mitotic entry by promoting the phase-specific m6A-dependent degradation of WEE1 transcripts. Promotes formation of phase-separated membraneless compartments, such as P-bodies or stress granules, by undergoing liquid-liquid phase separation upon binding to mRNAs containing multiple m6A-modified residues: polymethylated mRNAs act as a multivalent scaffold for the binding of YTHDF proteins, juxtaposing their disordered regions and thereby leading to phase separation. The resulting mRNA-YTHDF complexes then partition into different endogenous phase-separated membraneless compartments, such as P-bodies, stress granules or neuronal RNA granules. May also recognize and bind RNAs modified by C5-methylcytosine (m5C) and act as a regulator of rRNA processing. This Mus musculus (Mouse) protein is YTH domain-containing family protein 2.